The following is a 346-amino-acid chain: Elongation factor Ts (346 aa).

The tract at residues 80–83 is involved in Mg(2+) ion dislocation from EF-Tu; sequence TDFV.

This sequence belongs to the EF-Ts family.

Its subcellular location is the cytoplasm. Its function is as follows. Associates with the EF-Tu.GDP complex and induces the exchange of GDP to GTP. It remains bound to the aminoacyl-tRNA.EF-Tu.GTP complex up to the GTP hydrolysis stage on the ribosome. The sequence is that of Elongation factor Ts (tsf) from Streptococcus pneumoniae (strain ATCC BAA-255 / R6).